A 985-amino-acid polypeptide reads, in one-letter code: MAGKKTITINGVEMEASEEQTVLQLLNNSSIEVPQVCYHPSLGPIETCDTCIVSINGELKRSCSAELKDGDVIDTLSPDVKKAQVIGMDKILYNHELYCTVCDYNNGGCEIHNTVKEMKINHQSIPFDHKPYHKDESHPFYRYDPDQCILCGRCVEACQDVQVTETLTIDWERKRPRVIWDNDVPINESSCVSCGHCSTVCPCNAMMEKGMEGEAGYLTGINNETLRPMIEITKGVETGYGSILAISDMESAMRDERIKKTKTVCTYCGVGCSFDVWTKGRDILKVEPQEEAPANGISTCVKGKFGWDFVNSEERLTKPLIREGDHFREAEWEEALLLIASKFTELKEAFGPDSLAFITSSKCTNEESYLMQKLARGVIGTNNVDNCSRYCQSPATAGLFRTVGYGGDSGSITDIAQADLVLIIGSNTSESHPVLSTRIKRAHKLRGQKVIVADIRKHEMAERSDLFVQPRAGSDIVWLNAIAKYLIENGKADERFLRERVNGRDEYVKSLAPYTLEYAEEKTGIDQETLIQMAEMIGQADSVCALWAMGVTQHIGGSDTSTAISNLLLVTGNYGKPGAGSYPLRGHNNVQGASDFGSMPDRLPGYEKVTDEQVRQKYERVWGVPLPKEPGMTNHEMIEKIHSGQLKAMYVKGEEMGLVDSNINHVHAAYEKLDFFVVQDIFLSRTAEFADVVLPASPSLEKEGTFTNTERRIQRLYQVFEPLGESKPDWQIIMEVANKLGAGWLYEHPADIMEEAAKLSPIYAGVTYERLEGYNSLQWPVNADGKDSPLLFTERFPFPDGKAILYPVQWTEPKEFGEEYDIHVNNGRLLEHFHEGNLTYKSKGISEKTPEVFLEISPELAAERGIQDGTLVRLTSPFGNVKVKCLITDRVKGKEVYLPMNDSGEAAINLLTGSHADKDTDTPAYKETSAKMEILKHDGISPLPKINHRNGNPQPQIGVQVHKKWARKDYIFPGDAVKRGMGHNG.

The 2Fe-2S ferredoxin-type domain maps to 3-79 (GKKTITINGV…GDVIDTLSPD (77 aa)). Cysteine 37, cysteine 48, cysteine 51, and cysteine 63 together coordinate [2Fe-2S] cluster. Residues 79 to 119 (DVKKAQVIGMDKILYNHELYCTVCDYNNGGCEIHNTVKEMK) enclose the 4Fe-4S His(Cys)3-ligated-type domain. Residues histidine 95, cysteine 99, cysteine 102, cysteine 109, cysteine 148, cysteine 151, cysteine 154, cysteine 158, cysteine 191, cysteine 194, cysteine 197, cysteine 201, cysteine 265, cysteine 268, cysteine 272, and cysteine 300 each coordinate [4Fe-4S] cluster. 4Fe-4S ferredoxin-type domains lie at 139 to 170 (PFYR…LTID) and 182 to 211 (NDVP…EKGM). Residues 258 to 314 (IKKTKTVCTYCGVGCSFDVWTKGRDILKVEPQEEAPANGISTCVKGKFGWDFVNSEE) form the 4Fe-4S Mo/W bis-MGD-type domain.

In the C-terminal section; belongs to the prokaryotic molybdopterin-containing oxidoreductase family. Requires [2Fe-2S] cluster as cofactor. It depends on [4Fe-4S] cluster as a cofactor. Mo-bis(molybdopterin guanine dinucleotide) serves as cofactor.

The protein is Probable oxidoreductase YjgC (yjgC) of Bacillus subtilis (strain 168).